Reading from the N-terminus, the 175-residue chain is Endoribonuclease YbeY (175 aa).

Zn(2+) contacts are provided by His121, His125, and His131. Residues Pro154 to Pro175 form a disordered region. The segment covering Pro159–Pro175 has biased composition (polar residues).

Belongs to the endoribonuclease YbeY family. The cofactor is Zn(2+).

It is found in the cytoplasm. Functionally, single strand-specific metallo-endoribonuclease involved in late-stage 70S ribosome quality control and in maturation of the 3' terminus of the 16S rRNA. This Alcanivorax borkumensis (strain ATCC 700651 / DSM 11573 / NCIMB 13689 / SK2) protein is Endoribonuclease YbeY.